Consider the following 537-residue polypeptide: ATP synthase subunit alpha (537 aa).

174–181 (GDRQTGKT) is a binding site for ATP.

It belongs to the ATPase alpha/beta chains family. In terms of assembly, F-type ATPases have 2 components, CF(1) - the catalytic core - and CF(0) - the membrane proton channel. CF(1) has five subunits: alpha(3), beta(3), gamma(1), delta(1), epsilon(1). CF(0) has three main subunits: a(1), b(2) and c(9-12). The alpha and beta chains form an alternating ring which encloses part of the gamma chain. CF(1) is attached to CF(0) by a central stalk formed by the gamma and epsilon chains, while a peripheral stalk is formed by the delta and b chains.

The protein resides in the cell inner membrane. The catalysed reaction is ATP + H2O + 4 H(+)(in) = ADP + phosphate + 5 H(+)(out). Produces ATP from ADP in the presence of a proton gradient across the membrane. The alpha chain is a regulatory subunit. The sequence is that of ATP synthase subunit alpha from Verminephrobacter eiseniae (strain EF01-2).